The primary structure comprises 224 residues: LexA repressor (224 aa).

The segment at residues 31 to 51 (RAEIAAEFGFKSANAAEEHLQ) is a DNA-binding region (H-T-H motif). Residues S142 and K179 each act as for autocatalytic cleavage activity in the active site.

The protein belongs to the peptidase S24 family. As to quaternary structure, homodimer.

The catalysed reaction is Hydrolysis of Ala-|-Gly bond in repressor LexA.. Functionally, represses a number of genes involved in the response to DNA damage (SOS response), including recA and lexA. In the presence of single-stranded DNA, RecA interacts with LexA causing an autocatalytic cleavage which disrupts the DNA-binding part of LexA, leading to derepression of the SOS regulon and eventually DNA repair. This Paracidovorax citrulli (strain AAC00-1) (Acidovorax citrulli) protein is LexA repressor.